The sequence spans 202 residues: Casparian strip membrane protein 1 (202 aa).

The Cytoplasmic portion of the chain corresponds to 1–42; it reads MEKNKSTAIEIAESSKESKGKAPLLAAAVGHDRAAGYKRGVS. The helical transmembrane segment at 43-63 threads the bilayer; the sequence is IFDLFLRISAATAALAATIVM. At 64–90 the chain is on the extracellular side; the sequence is GTTEQTLPFFTQFFQFRAQYDDLPTFT. Residues 91 to 111 form a helical membrane-spanning segment; the sequence is FFVVGMAIVTGYLILSVPFSI. Residues 112-130 are Cytoplasmic-facing; that stretch reads VCIARPVAIGPRFLLIVGD. A helical membrane pass occupies residues 131–151; it reads TLKAVLATSAAGSSAAIVYLA. Over 152–173 the chain is Extracellular; it reads HNGNSDANWLDICQQFNDFCQR. Residues 174-194 form a helical membrane-spanning segment; it reads VSGAVVAAFVAVVLLIFLIVL. Residues 195–202 lie on the Cytoplasmic side of the membrane; that stretch reads SAMALRKN.

Belongs to the Casparian strip membrane proteins (CASP) family. As to quaternary structure, homodimer and heterodimers.

It is found in the cell membrane. Regulates membrane-cell wall junctions and localized cell wall deposition. Required for establishment of the Casparian strip membrane domain (CSD) and the subsequent formation of Casparian strips, a cell wall modification of the root endodermis that determines an apoplastic barrier between the intraorganismal apoplasm and the extraorganismal apoplasm and prevents lateral diffusion. The protein is Casparian strip membrane protein 1 of Striga hermonthica (Purple witchweed).